Consider the following 485-residue polypeptide: NADH-quinone oxidoreductase subunit N (485 aa).

14 consecutive transmembrane segments (helical) span residues 8–28, 35–55, 71–91, 105–125, 127–147, 159–179, 203–223, 235–255, 271–291, 297–317, 326–346, 373–393, 408–430, and 455–475; these read LIALLPLLIVGLTVVVVMLSI, FLNATLSVIGLNAALVSLWFV, GFAMLYTGLVLLASLATCTFA, FYLLVLIAALGGILLANANHL, SLFLGIELISLPLFGLVGYAF, YTILSAAASSFLLFGMALVYA, LLAGFGLMIVGLGFKLSLVPF, PAPVSTFLATASKIAIFGVVM, VVLAIIAFASIIFGNLMALSQ, LLGYSSISHLGYLLVALIALQ, VGVYLAGYLFSSLGAFGVVSL, AAVMTVMMLSLAGIPMTLGFI, WWLVGAVVVGSAIGLYYYLRVAV, and IVVLISALLVLVLGVWPQPLI.

It belongs to the complex I subunit 2 family. NDH-1 is composed of 13 different subunits. Subunits NuoA, H, J, K, L, M, N constitute the membrane sector of the complex.

The protein localises to the cell inner membrane. The catalysed reaction is a quinone + NADH + 5 H(+)(in) = a quinol + NAD(+) + 4 H(+)(out). NDH-1 shuttles electrons from NADH, via FMN and iron-sulfur (Fe-S) centers, to quinones in the respiratory chain. The immediate electron acceptor for the enzyme in this species is believed to be ubiquinone. Couples the redox reaction to proton translocation (for every two electrons transferred, four hydrogen ions are translocated across the cytoplasmic membrane), and thus conserves the redox energy in a proton gradient. The polypeptide is NADH-quinone oxidoreductase subunit N (Escherichia coli O139:H28 (strain E24377A / ETEC)).